We begin with the raw amino-acid sequence, 92 residues long: Serine rich endogenous peptide 11 (92 aa).

The first 29 residues, 1–29 (MENNTFSSKSINLLILLLLLCTFLCQTES), serve as a signal peptide directing secretion. The interval 50-92 (PNTDIGTPSSTSDRGGGGNGRRLMSQMDVGASSSGQGGGRNRH) is disordered. A compositionally biased stretch (polar residues) spans 53 to 62 (DIGTPSSTSD). 2 short sequence motifs (SCOOP motif) span residues 53 to 67 (DIGT…GGGG) and 75 to 89 (QMDV…GGGR). 2 short sequence motifs (sxS motif essential for MIK2 binding) span residues 59–61 (STS) and 81–83 (SSS).

This sequence belongs to the serine rich endogenous peptide (SCOOP) phytocytokine family. As to quaternary structure, interacts with MIK2 (via extracellular leucine-rich repeat domain); this interaction triggers the formation of complex between MIK2 and the BAK1/SERK3 and SERK4 coreceptors, and subsequent BAK1 activation by phosphorylation. In terms of tissue distribution, mostly expressed in seedlings shoots and roots, and, to a lower extent, in leaves.

It is found in the cell membrane. The protein resides in the secreted. Its subcellular location is the extracellular space. The protein localises to the apoplast. Brassicaceae-specific phytocytokine (plant endogenous peptide released into the apoplast) perceived by MIK2 in a BAK1/SERK3 and SERK4 coreceptors-dependent manner, that modulates various physiological and antimicrobial processes including growth prevention and reactive oxygen species (ROS) response regulation. This is Serine rich endogenous peptide 11 from Arabidopsis thaliana (Mouse-ear cress).